Here is a 464-residue protein sequence, read N- to C-terminus: Glutamate--tRNA ligase 1 (464 aa).

A 'HIGH' region motif is present at residues P10–G20. The 'KMSKS' region motif lies at K238 to R242. K241 serves as a coordination point for ATP.

This sequence belongs to the class-I aminoacyl-tRNA synthetase family. Glutamate--tRNA ligase type 1 subfamily. In terms of assembly, monomer.

It is found in the cytoplasm. It catalyses the reaction tRNA(Glu) + L-glutamate + ATP = L-glutamyl-tRNA(Glu) + AMP + diphosphate. In terms of biological role, catalyzes the attachment of glutamate to tRNA(Glu) in a two-step reaction: glutamate is first activated by ATP to form Glu-AMP and then transferred to the acceptor end of tRNA(Glu). The chain is Glutamate--tRNA ligase 1 from Helicobacter hepaticus (strain ATCC 51449 / 3B1).